The following is a 155-amino-acid chain: Large ribosomal subunit protein uL16m (155 aa).

It belongs to the universal ribosomal protein uL16 family.

It is found in the mitochondrion. In Petunia hybrida (Petunia), this protein is Large ribosomal subunit protein uL16m (RPL16).